A 405-amino-acid chain; its full sequence is Threonine synthase (405 aa).

Position 106 is an N6-(pyridoxal phosphate)lysine (Lys-106). Pyridoxal 5'-phosphate contacts are provided by residues Asn-132, 233 to 237 (GNAGN), and Thr-371.

This sequence belongs to the threonine synthase family. Requires pyridoxal 5'-phosphate as cofactor.

The enzyme catalyses O-phospho-L-homoserine + H2O = L-threonine + phosphate. It participates in amino-acid biosynthesis; L-threonine biosynthesis; L-threonine from L-aspartate: step 5/5. In terms of biological role, catalyzes the gamma-elimination of phosphate from L-phosphohomoserine and the beta-addition of water to produce L-threonine. The sequence is that of Threonine synthase (thrC) from Methanocaldococcus jannaschii (strain ATCC 43067 / DSM 2661 / JAL-1 / JCM 10045 / NBRC 100440) (Methanococcus jannaschii).